The chain runs to 412 residues: Proline-rich protein 30 (412 aa).

Composition is skewed to polar residues over residues 1 to 15 (MLPQ…QTSV) and 23 to 39 (GFSQ…QPLS). Disordered stretches follow at residues 1–88 (MLPQ…HPYS), 123–174 (PLTP…SNRQ), and 317–412 (RPKE…KSSV). Composition is skewed to low complexity over residues 50–59 (PFSSTQSRRP), 126–142 (PSFS…PHSP), and 334–350 (QLPA…ADPV). Residues 353–372 (TPSQTRSFRSAGLQSPNSPR) are compositionally biased toward polar residues.

This is Proline-rich protein 30 (PRR30) from Homo sapiens (Human).